The following is an 87-amino-acid chain: Large ribosomal subunit protein bL27 (87 aa).

Positions 1 to 21 are disordered; the sequence is MAHKKAGGSSRNGRDSESKRL.

It belongs to the bacterial ribosomal protein bL27 family.

The chain is Large ribosomal subunit protein bL27 from Burkholderia mallei (strain NCTC 10247).